We begin with the raw amino-acid sequence, 347 residues long: Homeobox protein knotted-1-like 9 (347 aa).

Residues Met1–Ala17 show a composition bias toward low complexity. Disordered regions lie at residues Met1–Leu36, Gln122–Asp145, and Asp179–Asp206. Over residues Leu22 to Leu36 the composition is skewed to pro residues. Residues Ser188–Asp203 are compositionally biased toward acidic residues. The ELK domain occupies Gln208 to Phe228. A DNA-binding region (homeobox; TALE-type) is located at residues Ser229–Thr293.

The protein belongs to the TALE/KNOX homeobox family.

It localises to the nucleus. This chain is Homeobox protein knotted-1-like 9, found in Oryza sativa subsp. japonica (Rice).